A 470-amino-acid polypeptide reads, in one-letter code: Cholesterol 7-desaturase nvd 1 (470 aa).

Residues 67–87 (LALCIAGFSVLMYFLYVLVFV) traverse the membrane as a helical segment. The Rieske domain occupies 136 to 238 (FRLVDSQQLE…CREVNKAIFV (103 aa)). The [2Fe-2S] cluster site is built by Cys176, His178, Cys196, and His199.

Belongs to the cholesterol 7-desaturase family. [2Fe-2S] cluster serves as cofactor.

It localises to the membrane. It catalyses the reaction cholesterol + NADPH + O2 + H(+) = 7-dehydrocholesterol + NADP(+) + 2 H2O. It carries out the reaction cholesterol + NADH + O2 + H(+) = 7-dehydrocholesterol + NAD(+) + 2 H2O. It participates in steroid hormone biosynthesis; dafachronic acid biosynthesis. Catalyzes the production of 7-dehydrocholesterol (7-DHC or cholesta-5,7-dien-3beta-ol) by inserting a double bond (desaturating) at the C7-C8 single bond of cholesterol. Essential regulator of steroid biosynthesis as this reaction is the first step in the synthesis of the steroid hormone Delta(7)-dafachronic acid. The sequence is that of Cholesterol 7-desaturase nvd 1 from Ciona intestinalis (Transparent sea squirt).